The following is a 426-amino-acid chain: Tyrosine--tRNA ligase (426 aa).

Residue Tyr-38 coordinates L-tyrosine. A 'HIGH' region motif is present at residues 43–52; sequence PTADSLHIGS. L-tyrosine is bound by residues Tyr-176 and Gln-180. The 'KMSKS' region motif lies at 236–240; the sequence is KFGKT. An ATP-binding site is contributed by Lys-239. The 68-residue stretch at 359 to 426 folds into the S4 RNA-binding domain; that stretch reads QTIVEVLTQS…KKLFNLYIWK (68 aa).

Belongs to the class-I aminoacyl-tRNA synthetase family. TyrS type 1 subfamily. As to quaternary structure, homodimer.

The protein localises to the cytoplasm. It catalyses the reaction tRNA(Tyr) + L-tyrosine + ATP = L-tyrosyl-tRNA(Tyr) + AMP + diphosphate + H(+). Functionally, catalyzes the attachment of tyrosine to tRNA(Tyr) in a two-step reaction: tyrosine is first activated by ATP to form Tyr-AMP and then transferred to the acceptor end of tRNA(Tyr). This is Tyrosine--tRNA ligase from Aliivibrio salmonicida (strain LFI1238) (Vibrio salmonicida (strain LFI1238)).